We begin with the raw amino-acid sequence, 411 residues long: Imidazolonepropionase (411 aa).

Fe(3+) contacts are provided by H75 and H77. Zn(2+) contacts are provided by H75 and H77. Residues R84, Y147, and H180 each contribute to the 4-imidazolone-5-propanoate site. Residue Y147 participates in N-formimidoyl-L-glutamate binding. H245 serves as a coordination point for Fe(3+). Zn(2+) is bound at residue H245. Residue Q248 participates in 4-imidazolone-5-propanoate binding. D320 is a binding site for Fe(3+). D320 contacts Zn(2+). N-formimidoyl-L-glutamate-binding residues include N322 and G324. Residue T325 participates in 4-imidazolone-5-propanoate binding.

This sequence belongs to the metallo-dependent hydrolases superfamily. HutI family. Zn(2+) serves as cofactor. It depends on Fe(3+) as a cofactor.

Its subcellular location is the cytoplasm. It catalyses the reaction 4-imidazolone-5-propanoate + H2O = N-formimidoyl-L-glutamate. Its pathway is amino-acid degradation; L-histidine degradation into L-glutamate; N-formimidoyl-L-glutamate from L-histidine: step 3/3. Its function is as follows. Catalyzes the hydrolytic cleavage of the carbon-nitrogen bond in imidazolone-5-propanoate to yield N-formimidoyl-L-glutamate. It is the third step in the universal histidine degradation pathway. The chain is Imidazolonepropionase from Aeromonas hydrophila subsp. hydrophila (strain ATCC 7966 / DSM 30187 / BCRC 13018 / CCUG 14551 / JCM 1027 / KCTC 2358 / NCIMB 9240 / NCTC 8049).